We begin with the raw amino-acid sequence, 1164 residues long: Protein PLASTID MOVEMENT IMPAIRED 1-RELATED 1 (1164 aa).

The tract at residues 30–54 is disordered; it reads KNPRGSVAGSNKTPTKPLSRSNLAE. Over residues 37–51 the composition is skewed to polar residues; it reads AGSNKTPTKPLSRSN. Residues 69–217 form the C2 NT-type domain; it reads INHVRNRRFN…TLSMSFGYTV (149 aa). Polar residues predominate over residues 224 to 263; sequence PASSGSTQNFRSSSNVKQTSNNTGLTRAISAKSSLGNGKS. Disordered stretches follow at residues 224–268, 466–486, 1038–1063, and 1124–1164; these read PASS…SRRY, APEE…PKDA, SELK…PMEE, and GSAK…IMPK. Composition is skewed to basic and acidic residues over residues 469–486 and 1052–1062; these read EGNK…PKDA and SDAKKEEKPME.

It localises to the cytoplasm. In terms of biological role, together with PMI1, necessary for chloroplast and nuclear photorelocation movements via the regulation of chloroplast-actin (cp-actin) filaments in pavement cells. This Arabidopsis thaliana (Mouse-ear cress) protein is Protein PLASTID MOVEMENT IMPAIRED 1-RELATED 1.